Reading from the N-terminus, the 862-residue chain is Protein SEY1 (862 aa).

Over 1 to 743 (MASNGHFSSV…KRSAIGGITQ (743 aa)) the chain is Cytoplasmic. Positions 48-301 (GFNYHLISVF…IPADGFAVYA (254 aa)) constitute a GB1/RHD3-type G domain. Position 58–65 (58–65 (GSQSTGKS)) interacts with GTP. Residues 476-500 (SDYKQELSLFQKDLEKISSQLRKDE) are a coiled coil. Residues 744 to 764 (VPLYFYGLLLALGWNEIIAVL) form a helical membrane-spanning segment. Topologically, residues 765–767 (RNP) are lumenal. A helical transmembrane segment spans residues 768–788 (IYFIFLLLIGVGAYVTFRLNL). Topologically, residues 789 to 862 (WGPMINMAEA…TSDDDNDDDL (74 aa)) are cytoplasmic. The disordered stretch occupies residues 818–862 (SDSGRQAMAMSGRNARGTEEYEMSSNLKSKGRRTDTSDDDNDDDL).

The protein belongs to the TRAFAC class dynamin-like GTPase superfamily. GB1/RHD3 GTPase family. RHD3 subfamily.

It is found in the endoplasmic reticulum membrane. Functionally, cooperates with the reticulon proteins and tubule-shaping DP1 family proteins to generate and maintain the structure of the tubular endoplasmic reticulum network. Has GTPase activity, which is required for its function in ER organization. The chain is Protein SEY1 from Arthroderma otae (strain ATCC MYA-4605 / CBS 113480) (Microsporum canis).